Consider the following 97-residue polypeptide: Cell division topological specificity factor (97 aa).

It belongs to the MinE family.

Functionally, prevents the cell division inhibition by proteins MinC and MinD at internal division sites while permitting inhibition at polar sites. This ensures cell division at the proper site by restricting the formation of a division septum at the midpoint of the long axis of the cell. The polypeptide is Cell division topological specificity factor (Rhodospirillum centenum (strain ATCC 51521 / SW)).